Reading from the N-terminus, the 428-residue chain is Adenylosuccinate synthetase (428 aa).

Residues 12–18 (GDEGKGK) and 40–42 (GHT) each bind GTP. Catalysis depends on aspartate 13, which acts as the Proton acceptor. Residues aspartate 13 and glycine 40 each contribute to the Mg(2+) site. IMP is bound by residues 13–16 (DEGK), 38–41 (NAGH), threonine 130, arginine 144, glutamine 225, threonine 240, and arginine 304. The active-site Proton donor is histidine 41. 300–306 (VTTGRAR) serves as a coordination point for substrate. GTP contacts are provided by residues arginine 306, 332–334 (KID), and 414–416 (SVG).

It belongs to the adenylosuccinate synthetase family. Homodimer. Mg(2+) is required as a cofactor.

The protein localises to the cytoplasm. It catalyses the reaction IMP + L-aspartate + GTP = N(6)-(1,2-dicarboxyethyl)-AMP + GDP + phosphate + 2 H(+). It participates in purine metabolism; AMP biosynthesis via de novo pathway; AMP from IMP: step 1/2. Plays an important role in the de novo pathway of purine nucleotide biosynthesis. Catalyzes the first committed step in the biosynthesis of AMP from IMP. The chain is Adenylosuccinate synthetase from Clostridium botulinum (strain Okra / Type B1).